Reading from the N-terminus, the 323-residue chain is Acetyl-coenzyme A carboxylase carboxyl transferase subunit alpha (323 aa).

Positions 39-293 (RLSKKSQQLT…RRALADSLRQ (255 aa)) constitute a CoA carboxyltransferase C-terminal domain.

This sequence belongs to the AccA family. In terms of assembly, acetyl-CoA carboxylase is a heterohexamer composed of biotin carboxyl carrier protein (AccB), biotin carboxylase (AccC) and two subunits each of ACCase subunit alpha (AccA) and ACCase subunit beta (AccD).

It localises to the cytoplasm. The catalysed reaction is N(6)-carboxybiotinyl-L-lysyl-[protein] + acetyl-CoA = N(6)-biotinyl-L-lysyl-[protein] + malonyl-CoA. It participates in lipid metabolism; malonyl-CoA biosynthesis; malonyl-CoA from acetyl-CoA: step 1/1. Component of the acetyl coenzyme A carboxylase (ACC) complex. First, biotin carboxylase catalyzes the carboxylation of biotin on its carrier protein (BCCP) and then the CO(2) group is transferred by the carboxyltransferase to acetyl-CoA to form malonyl-CoA. This chain is Acetyl-coenzyme A carboxylase carboxyl transferase subunit alpha, found in Burkholderia lata (strain ATCC 17760 / DSM 23089 / LMG 22485 / NCIMB 9086 / R18194 / 383).